Consider the following 203-residue polypeptide: dITP/XTP pyrophosphatase (203 aa).

16–21 contributes to the substrate binding site; it reads SHNRGK. Positions 48 and 77 each coordinate Mg(2+). Residue Asp-77 is the Proton acceptor of the active site. Residues Ser-78, 161 to 164, Lys-184, and 189 to 190 contribute to the substrate site; these read FGYD and HR.

This sequence belongs to the HAM1 NTPase family. As to quaternary structure, homodimer. Requires Mg(2+) as cofactor.

The catalysed reaction is XTP + H2O = XMP + diphosphate + H(+). It catalyses the reaction dITP + H2O = dIMP + diphosphate + H(+). It carries out the reaction ITP + H2O = IMP + diphosphate + H(+). Its function is as follows. Pyrophosphatase that catalyzes the hydrolysis of nucleoside triphosphates to their monophosphate derivatives, with a high preference for the non-canonical purine nucleotides XTP (xanthosine triphosphate), dITP (deoxyinosine triphosphate) and ITP. Seems to function as a house-cleaning enzyme that removes non-canonical purine nucleotides from the nucleotide pool, thus preventing their incorporation into DNA/RNA and avoiding chromosomal lesions. The polypeptide is dITP/XTP pyrophosphatase (Rhodospirillum centenum (strain ATCC 51521 / SW)).